The chain runs to 141 residues: Cystatin-S (141 aa).

A signal peptide spans 1–20 (MARPLCTLLLLMATLAGALA). 2 positions are modified to phosphoserine: Ser-21 and Ser-23. Positions 76 to 80 (QTFGG) match the Secondary area of contact motif. 2 disulfides stabilise this stretch: Cys-94-Cys-104 and Cys-118-Cys-138.

The protein belongs to the cystatin family. Phosphorylated at both its N- and C-terminal regions. In terms of tissue distribution, expressed in submandibular and sublingual saliva but not in parotid saliva (at protein level). Expressed in saliva, tears, urine and seminal fluid.

It is found in the secreted. This protein strongly inhibits papain and ficin, partially inhibits stem bromelain and bovine cathepsin C, but does not inhibit porcine cathepsin B or clostripain. Papain is inhibited non-competitively. This chain is Cystatin-S (CST4), found in Homo sapiens (Human).